A 733-amino-acid chain; its full sequence is Probable Rho-GTPase-activating protein 6 (733 aa).

Residues 116–125 (VFNESKSSSP) are compositionally biased toward polar residues. Positions 116–135 (VFNESKSSSPPDAHTDKYFT) are disordered. Thr-141 is subject to Phosphothreonine. The disordered stretch occupies residues 174-256 (RFDKPSNNGP…SKGSWSSILR (83 aa)). Residues 179–195 (SNNGPLGRSSLNLSSLS) are compositionally biased toward low complexity. Polar residues-rich tracts occupy residues 196-218 (HELQTSQDSPSLSATNQLSSSDT) and 225-240 (PPSSFGSQRQFNASQD). Residues 312–546 (TNLCKFTFPT…GLIIHWPEVL (235 aa)) enclose the Rho-GAP domain. Positions 692–713 (PVTVTASSETNKKSQKINKKAS) are disordered. Basic residues predominate over residues 704–713 (KSQKINKKAS).

This Schizosaccharomyces pombe (strain 972 / ATCC 24843) (Fission yeast) protein is Probable Rho-GTPase-activating protein 6 (rga6).